The following is a 207-amino-acid chain: Protein Nef (207 aa).

A lipid anchor (N-myristoyl glycine; by host) is attached at Gly-2. Phosphoserine; by host is present on Ser-6. An acidic; interacts with host PACS1 and PACS2; stabilizes the interaction of NEF/MHC-I with host AP1M1; necessary for MHC-I internalization region spans residues 62 to 66; sequence EEEEE. Residues 70 to 79 form an SH3-binding; interaction with Src family tyrosine kinases region; that stretch reads PVRPQVPLRP. The short motif at 73 to 76 is the PxxP; stabilizes the interaction of NEF/MHC-I with host AP1M1; necessary for MHC-I internalization element; sequence PQVP. The segment at 109–125 is mediates dimerization, Nef-PTE1 interaction; sequence EILDLWVYNTQGFFPDW. The interval 149–181 is binding to ATP6V1H; the sequence is VDPSEVEEINEGENNCLLHPASLHGMEDEDREV. The Dileucine internalization motif; necessary for CD4 internalization signature appears at 165–166; sequence LL. Positions 175-176 match the Diacidic; necessary for CD4 internalization motif; sequence ED.

It belongs to the lentivirus primate group Nef protein family. As to quaternary structure, monomer; cytosolic form. Homodimer; membrane bound form. Interacts with Nef associated p21-activated kinase (PAK2); this interaction activates PAK2. Associates with the Nef-MHC-I-AP1 complex; this complex is required for MHC-I internalization. Interacts (via C-terminus) with host PI3-kinase. Interacts with host PACS1; this interaction seems to be weak. Interacts with host PACS2. Interacts with host LCK and MAPK3; these interactions inhibit the kinase activity of the latter. Interacts with host ATP6V1H; this interaction may play a role in CD4 endocytosis. Associates with the CD4-Nef-AP2 complex; this complex is required for CD4 internalization. Interacts with host AP2 subunit alpha and AP2 subunit sigma2. Interacts with TCR-zeta chain; this interaction up-regulates the Fas ligand (FasL) surface expression. Interacts with host HCK, LYN, and SRC; these interactions activate the Src family kinases. Interacts with MAP3K5; this interaction inhibits the Fas and TNFR-mediated death signals. Interacts with beta-COP and PTE1. Interacts with human RACK1; this increases Nef phosphorylation by PKC. Interacts with TP53; this interaction decreases the half-life of TP53, protecting the infected cell against p53-mediated apoptosis. In terms of processing, the virion-associated Nef proteins are cleaved by the viral protease to release the soluble C-terminal core protein. Nef is probably cleaved concomitantly with viral structural proteins on maturation of virus particles. Myristoylated. Post-translationally, phosphorylated on serine residues, probably by host PKCdelta and theta.

It localises to the host cell membrane. The protein localises to the virion. Its subcellular location is the secreted. It is found in the host Golgi apparatus membrane. In terms of biological role, factor of infectivity and pathogenicity, required for optimal virus replication. Alters numerous pathways of T-lymphocyte function and down-regulates immunity surface molecules in order to evade host defense and increase viral infectivity. Alters the functionality of other immunity cells, like dendritic cells, monocytes/macrophages and NK cells. Functionally, in infected CD4(+) T-lymphocytes, down-regulates the surface MHC-I, mature MHC-II, CD4, CD28, CCR5 and CXCR4 molecules. Mediates internalization and degradation of host CD4 through the interaction of with the cytoplasmic tail of CD4, the recruitment of AP-2 (clathrin adapter protein complex 2), internalization through clathrin coated pits, and subsequent transport to endosomes and lysosomes for degradation. Diverts host MHC-I molecules to the trans-Golgi network-associated endosomal compartments by an endocytic pathway to finally target them for degradation. MHC-I down-regulation may involve AP-1 (clathrin adapter protein complex 1) or possibly Src family kinase-ZAP70/Syk-PI3K cascade recruited by PACS2. In consequence infected cells are masked for immune recognition by cytotoxic T-lymphocytes. Decreasing the number of immune receptors also prevents reinfection by more HIV particles (superinfection). Down-regulates host SERINC3 and SERINC5 thereby excluding these proteins from the viral particles. Virion infectivity is drastically higher when SERINC3 or SERINC5 are excluded from the viral envelope, because these host antiviral proteins impair the membrane fusion event necessary for subsequent virion penetration. Its function is as follows. Bypasses host T-cell signaling by inducing a transcriptional program nearly identical to that of anti-CD3 cell activation. Interaction with TCR-zeta chain up-regulates the Fas ligand (FasL). Increasing surface FasL molecules and decreasing surface MHC-I molecules on infected CD4(+) cells send attacking cytotoxic CD8+ T-lymphocytes into apoptosis. Plays a role in optimizing the host cell environment for viral replication without causing cell death by apoptosis. Protects the infected cells from apoptosis in order to keep them alive until the next virus generation is ready to strike. Inhibits the Fas and TNFR-mediated death signals by blocking MAP3K5/ASK1. Decreases the half-life of TP53, protecting the infected cell against p53-mediated apoptosis. Inhibits the apoptotic signals regulated by the Bcl-2 family proteins through the formation of a Nef/PI3-kinase/PAK2 complex that leads to activation of PAK2 and induces phosphorylation of host BAD. In terms of biological role, extracellular Nef protein targets CD4(+) T-lymphocytes for apoptosis by interacting with CXCR4 surface receptors. The polypeptide is Protein Nef (Homo sapiens (Human)).